A 288-amino-acid polypeptide reads, in one-letter code: 33 kDa chaperonin (288 aa).

2 cysteine pairs are disulfide-bonded: cysteine 235/cysteine 237 and cysteine 268/cysteine 271.

The protein belongs to the HSP33 family. Post-translationally, under oxidizing conditions two disulfide bonds are formed involving the reactive cysteines. Under reducing conditions zinc is bound to the reactive cysteines and the protein is inactive.

The protein localises to the cytoplasm. Functionally, redox regulated molecular chaperone. Protects both thermally unfolding and oxidatively damaged proteins from irreversible aggregation. Plays an important role in the bacterial defense system toward oxidative stress. In Streptococcus thermophilus (strain ATCC BAA-491 / LMD-9), this protein is 33 kDa chaperonin.